The primary structure comprises 265 residues: Bidirectional sugar transporter NEC1 (265 aa).

Residues 1–8 are Extracellular-facing; that stretch reads MAQLRADD. The chain crosses the membrane as a helical span at residues 9–29; it reads LSFIFGLLGNIVSFMVFLAPV. The 87-residue stretch at 11 to 97 folds into the MtN3/slv 1 domain; it reads FIFGLLGNIV…SLFLFYAPRK (87 aa). Over 30-44 the chain is Cytoplasmic; it reads PTFYKIYKRKSSEGY. Residues 45 to 65 form a helical membrane-spanning segment; the sequence is QAIPYMVALFSAGLLLYYAYL. At 66–71 the chain is on the extracellular side; it reads RKNAYL. A helical membrane pass occupies residues 72–92; it reads IVSINGFGCAIELTYISLFLF. The Cytoplasmic portion of the chain corresponds to 93-103; the sequence is YAPRKSKIFTG. The helical transmembrane segment at 104–124 threads the bilayer; the sequence is WLMLLELGALGMVMPITYLLA. Residues 125–130 lie on the Extracellular side of the membrane; sequence EGSHRV. A helical transmembrane segment spans residues 131–151; it reads MIVGWICAAINVAVFAAPLSI. The region spanning 132–216 is the MtN3/slv 2 domain; sequence IVGWICAAIN…LLYFVYKDSK (85 aa). The Cytoplasmic portion of the chain corresponds to 152-164; sequence MRQVIKTKSVEFM. The chain crosses the membrane as a helical span at residues 165–185; that stretch reads PFTLSLFLTLCATMWFFYGFF. Residues 186 to 190 are Extracellular-facing; the sequence is KKDFY. A helical transmembrane segment spans residues 191-211; the sequence is IAFPNILGFLFGIVQMLLYFV. Residues 212–265 are Cytoplasmic-facing; sequence YKDSKRIDDEKSDPVREATKSKEGVEIIINIEDDNSDNALQSMEKDFSRLRTSK.

The protein belongs to the SWEET sugar transporter family. As to quaternary structure, forms homooligomers and/or heterooligomers. As to expression, highly expressed in nectary tissue and weakly in the stamen, especially in stomium cells and in the upper part of the filaments.

Its subcellular location is the cell membrane. Functionally, mediates both low-affinity uptake and efflux of sugar across the plasma membrane. Promotes the formation of phloem bundles in mid-veins. Probably involved in the development of stomium cells that control anther opening time. Required for pollen viability. The sequence is that of Bidirectional sugar transporter NEC1 (NEC1) from Petunia hybrida (Petunia).